The primary structure comprises 360 residues: S-adenosylmethionine:tRNA ribosyltransferase-isomerase (360 aa).

Belongs to the QueA family. Monomer.

It localises to the cytoplasm. It catalyses the reaction 7-aminomethyl-7-carbaguanosine(34) in tRNA + S-adenosyl-L-methionine = epoxyqueuosine(34) in tRNA + adenine + L-methionine + 2 H(+). The protein operates within tRNA modification; tRNA-queuosine biosynthesis. Functionally, transfers and isomerizes the ribose moiety from AdoMet to the 7-aminomethyl group of 7-deazaguanine (preQ1-tRNA) to give epoxyqueuosine (oQ-tRNA). The chain is S-adenosylmethionine:tRNA ribosyltransferase-isomerase from Rhizobium rhizogenes (strain K84 / ATCC BAA-868) (Agrobacterium radiobacter).